The following is a 492-amino-acid chain: MKKAILSVSNKSGIVEFAKSLIKLDYELYSTGGTKGALEDASVPVKSVSELTQFPEIMDGRVKTLHPAVHGGILADRDKPEHLEQLSEQHIDLIDMVVVNLYPFQKTVAKPDVTEAEAIENIDIGGPTMLRAAAKNFKHVTTIVHPADYNEVIERIKEDRLDEDFRKELMIKVFAHTNEYDHAIVSFFKGDSEQLRYGENPQQSARFVRTSNSKHTIAGAKQLHGKALSFNNIKDADSALSLVKKFKESAAVAVKHMNPCGVGIGDNIETAFKHAYDADNQSIFGGIIALNRTVTSDLAETLHAIFLEVVIAPRFTDEALDILTKKKNIRLLEIDMTIDNREEEFVSVSGGYLVQDKDNFEVAKEDMKVVTDKAPTDDQWDAMLLGWKVIPSVKSNAVILSNTKQTVGIGAGQMNRVGSAKIALERAIEINDNVALVSDGFFPMDDTVELAAQHGIKAIIQPGGSIKDQDSIDMANKYGIAMVTTGMRHFKH.

In terms of domain architecture, MGS-like spans 1-144 (MKKAILSVSN…KNFKHVTTIV (144 aa)).

Belongs to the PurH family.

It catalyses the reaction (6R)-10-formyltetrahydrofolate + 5-amino-1-(5-phospho-beta-D-ribosyl)imidazole-4-carboxamide = 5-formamido-1-(5-phospho-D-ribosyl)imidazole-4-carboxamide + (6S)-5,6,7,8-tetrahydrofolate. The catalysed reaction is IMP + H2O = 5-formamido-1-(5-phospho-D-ribosyl)imidazole-4-carboxamide. It participates in purine metabolism; IMP biosynthesis via de novo pathway; 5-formamido-1-(5-phospho-D-ribosyl)imidazole-4-carboxamide from 5-amino-1-(5-phospho-D-ribosyl)imidazole-4-carboxamide (10-formyl THF route): step 1/1. The protein operates within purine metabolism; IMP biosynthesis via de novo pathway; IMP from 5-formamido-1-(5-phospho-D-ribosyl)imidazole-4-carboxamide: step 1/1. This Staphylococcus haemolyticus (strain JCSC1435) protein is Bifunctional purine biosynthesis protein PurH.